A 530-amino-acid polypeptide reads, in one-letter code: Tyrosinase (530 aa).

The N-terminal stretch at 1–17 is a signal peptide; the sequence is MLLAALYCLLWSFRTSA. The Lumenal, melanosome portion of the chain corresponds to 19-473; sequence HFPRACASSK…IKPYLEQAQR (455 aa). An N-linked (GlcNAc...) asparagine glycan is attached at Asn86. Positions 180, 202, and 211 each coordinate Cu cation. N-linked (GlcNAc...) asparagine glycosylation is found at Asn230, Asn290, and Asn337. 2 residues coordinate Cu cation: His363 and His367. Asn371 is a glycosylation site (N-linked (GlcNAc...) asparagine). Cu cation is bound at residue His390. The helical transmembrane segment at 474–494 threads the bilayer; the sequence is IWPWLIGAAVVGSVLTAVLGG. The Cytoplasmic portion of the chain corresponds to 495–530; it reads LTSLLCRRKRNQLPEEKQPLLMEKEDYHNLMYQSHL.

This sequence belongs to the tyrosinase family. Forms an OPN3-dependent complex with DCT in response to blue light in melanocytes. Cu(2+) serves as cofactor. Glycosylated.

It localises to the melanosome membrane. Its subcellular location is the melanosome. It carries out the reaction 2 L-dopa + O2 = 2 L-dopaquinone + 2 H2O. The enzyme catalyses L-tyrosine + O2 = L-dopaquinone + H2O. It catalyses the reaction 2 5,6-dihydroxyindole-2-carboxylate + O2 = 2 indole-5,6-quinone-2-carboxylate + 2 H2O. This is a copper-containing oxidase that functions in the formation of pigments such as melanins and other polyphenolic compounds. Catalyzes the initial and rate limiting step in the cascade of reactions leading to melanin production from tyrosine. In addition to hydroxylating tyrosine to DOPA (3,4-dihydroxyphenylalanine), also catalyzes the oxidation of DOPA to DOPA-quinone, and possibly the oxidation of DHI (5,6-dihydroxyindole) to indole-5,6 quinone. The chain is Tyrosinase (TYR) from Bos taurus (Bovine).